We begin with the raw amino-acid sequence, 232 residues long: Small ribosomal subunit protein uS3 (232 aa).

One can recognise a KH type-2 domain in the interval 39–107; that stretch reads VRQYLTKELK…PAQINIAEVR (69 aa).

The protein belongs to the universal ribosomal protein uS3 family. As to quaternary structure, part of the 30S ribosomal subunit. Forms a tight complex with proteins S10 and S14.

In terms of biological role, binds the lower part of the 30S subunit head. Binds mRNA in the 70S ribosome, positioning it for translation. In Aliivibrio fischeri (strain MJ11) (Vibrio fischeri), this protein is Small ribosomal subunit protein uS3.